Here is a 416-residue protein sequence, read N- to C-terminus: N-acetylmuramoyl-L-alanine amidase AmiC (416 aa).

Positions Met-1–Ala-26 are cleaved as a signal peptide. Residues Arg-166–Val-191 form a disordered region. The 214-residue stretch at Ile-192–Gln-405 folds into the MurNAc-LAA domain.

Belongs to the N-acetylmuramoyl-L-alanine amidase 3 family.

Its subcellular location is the periplasm. It catalyses the reaction Hydrolyzes the link between N-acetylmuramoyl residues and L-amino acid residues in certain cell-wall glycopeptides.. Cell-wall hydrolase involved in septum cleavage during cell division. The polypeptide is N-acetylmuramoyl-L-alanine amidase AmiC (amiC) (Neisseria meningitidis serogroup B (strain ATCC BAA-335 / MC58)).